The chain runs to 116 residues: Large ribosomal subunit protein bL19 (116 aa).

This sequence belongs to the bacterial ribosomal protein bL19 family.

In terms of biological role, this protein is located at the 30S-50S ribosomal subunit interface and may play a role in the structure and function of the aminoacyl-tRNA binding site. The protein is Large ribosomal subunit protein bL19 of Magnetococcus marinus (strain ATCC BAA-1437 / JCM 17883 / MC-1).